Reading from the N-terminus, the 517-residue chain is Cytochrome P450 monooxygenase stcB (517 aa).

Cys461 is a heme binding site.

The protein belongs to the cytochrome P450 family. The cofactor is heme.

Its pathway is mycotoxin biosynthesis; sterigmatocystin biosynthesis. Its function is as follows. Cytochrome P450 monooxygenase; part of the gene cluster that mediates the biosynthesis of sterigmatocystin (ST), a polyketide-derived furanocoumarin which is part of the most toxic and carcinogenic compounds among the known mycotoxins. The first step in the biosynthesis of sterigmatocystin is the production of hexanoate by the fatty acid synthase (FAS) units stcJ and stcK. The polyketide backbone is assembled by the non-reducing polyketide synthase stcA by condensation of the starter hexanoyl-CoA and 7 malonyl-CoA extender units followed by cyclization and release of norsolorinic acid. Norsolorinic acid is the first stable intermediate in the biosynthesis of sterigmatocystin and is converted into averantin (AVN) by the ketoreductase stcE which reduces the hexanoate ketone to an alcohol. Averantin is then oxidized into 5'-hydroxyaverantin (HAVN) by the cytochrome P450 monooxygenase stcF. 5'-hydroxyaverantin is further converted to 5'-oxyaverantin (OAVN) by the 5'-hydroxyaverantin dehydrogenase stcG. The next step is the conversion of OAVN into averufin (AVF) which is catalyzed by a yet to be identified enzyme. The cytochrome P450 monooxygenase stcB and the flavin-binding monooxygenase stcW are both required for the conversion of averufin to 1-hydroxyversicolorone. The esterase stcI probably catalyzes the formation of versiconal hemiacetal acetate from 1-hydroxyversicolorone. The oxydoreductase stcN then probably catalyzes the biosynthetic step from versiconal to versicolorin B (VERB). The next step is performed by the versicolorin B desaturase stcL to produce versicolorin A (VERA). The ketoreductase stcU and the cytochrome P450 monooxygenase stcS are involved in the conversion of versicolorin A to demethylsterigmatocystin. The Baeyer-Villiger oxidas stcQ and the reductase stcR might be involved in the biosynthetic step from versicolorin A to demethylsterigmatocystin. The final step in the biosynthesis of sterigmatocystin is the methylation of demethylsterigmatocystin catalyzed by the methyltransferase stcP. This Emericella nidulans (strain FGSC A4 / ATCC 38163 / CBS 112.46 / NRRL 194 / M139) (Aspergillus nidulans) protein is Cytochrome P450 monooxygenase stcB.